A 230-amino-acid chain; its full sequence is Uracil-DNA glycosylase (230 aa).

D65 (proton acceptor) is an active-site residue.

The protein belongs to the uracil-DNA glycosylase (UDG) superfamily. UNG family.

It localises to the cytoplasm. It catalyses the reaction Hydrolyzes single-stranded DNA or mismatched double-stranded DNA and polynucleotides, releasing free uracil.. Excises uracil residues from the DNA which can arise as a result of misincorporation of dUMP residues by DNA polymerase or due to deamination of cytosine. The chain is Uracil-DNA glycosylase from Lactiplantibacillus plantarum (strain ATCC BAA-793 / NCIMB 8826 / WCFS1) (Lactobacillus plantarum).